Consider the following 484-residue polypeptide: uncharacterized protein (484 aa).

The 69-residue stretch at 14–82 (VPLHRQIEQY…KGGGTKVVNS (69 aa)) folds into the HTH gntR-type domain. The segment at residues 42 to 61 (QRTLADMFQVNRSTVTAAID) is a DNA-binding region (H-T-H motif). N6-(pyridoxal phosphate)lysine is present on K327.

The protein in the C-terminal section; belongs to the class-I pyridoxal-phosphate-dependent aminotransferase family. The cofactor is pyridoxal 5'-phosphate.

This is an uncharacterized protein from Bacillus subtilis (strain 168).